A 336-amino-acid polypeptide reads, in one-letter code: tRNA pseudouridine synthase D (336 aa).

D84 serves as the catalytic Nucleophile. In terms of domain architecture, TRUD spans G164–D298.

The protein belongs to the pseudouridine synthase TruD family.

The catalysed reaction is uridine(13) in tRNA = pseudouridine(13) in tRNA. Responsible for synthesis of pseudouridine from uracil-13 in transfer RNAs. The protein is tRNA pseudouridine synthase D of Cellvibrio japonicus (strain Ueda107) (Pseudomonas fluorescens subsp. cellulosa).